The sequence spans 597 residues: Aspartate--tRNA ligase (597 aa).

Glu-171 contacts L-aspartate. The segment at 195–198 (QLFK) is aspartate. Arg-217 contributes to the L-aspartate binding site. Residues 217-219 (RDE) and Gln-226 contribute to the ATP site. His-448 contacts L-aspartate. Glu-482 contributes to the ATP binding site. Arg-489 lines the L-aspartate pocket. 534–537 (GLDR) contributes to the ATP binding site.

This sequence belongs to the class-II aminoacyl-tRNA synthetase family. Type 1 subfamily. In terms of assembly, homodimer.

The protein localises to the cytoplasm. It carries out the reaction tRNA(Asp) + L-aspartate + ATP = L-aspartyl-tRNA(Asp) + AMP + diphosphate. Catalyzes the attachment of L-aspartate to tRNA(Asp) in a two-step reaction: L-aspartate is first activated by ATP to form Asp-AMP and then transferred to the acceptor end of tRNA(Asp). This chain is Aspartate--tRNA ligase, found in Photobacterium profundum (strain SS9).